We begin with the raw amino-acid sequence, 514 residues long: Mitochondrial-processing peptidase subunit alpha (514 aa).

The N-terminal 55 residues, 1–55, are a transit peptide targeting the mitochondrion; the sequence is MLLRKSIPYIKICRDISASVRNNKEIAQKLPLSVPLPMENNSKSIEKGCPPMGRN.

The protein belongs to the peptidase M16 family. Heterodimer of mppa-1 (alpha) and mppb-1 (beta) subunits, forming the mitochondrial processing protease (MPP) in which mppa-1 is involved in substrate recognition and binding and mppb-1 is the catalytic subunit.

Its subcellular location is the mitochondrion matrix. In terms of biological role, substrate recognition and binding subunit of the essential mitochondrial processing protease (MPP), which cleaves the mitochondrial sequence off newly imported precursors proteins. The protein is Mitochondrial-processing peptidase subunit alpha of Caenorhabditis elegans.